Reading from the N-terminus, the 65-residue chain is Trypsin inhibitor 1 (65 aa).

Cystine bridges form between Cys39/Cys56, Cys46/Cys58, and Cys52/Cys64.

The protein belongs to the protease inhibitor I7 (squash-type serine protease inhibitor) family.

It localises to the secreted. Inhibits trypsin. The sequence is that of Trypsin inhibitor 1 from Trichosanthes kirilowii (Chinese snake gourd).